Consider the following 804-residue polypeptide: ABC transporter aclQ (804 aa).

9 helical membrane passes run 3–23 (LAVL…ISYL), 52–72 (FTAI…SITI), 97–117 (IAVF…PFSP), 119–139 (LSHS…LAMF), 155–175 (LQLG…ALYF), 206–226 (HGGW…LWPS), 239–259 (FVLL…LGIV), 349–369 (LVFQ…YFLI), and 373–393 (AFYS…TIYM). The ABC transmembrane type-1 domain maps to 236 to 518 (IFCFVLLVIQ…FGSFYTQVQN (283 aa)). A glycan (N-linked (GlcNAc...) asparagine) is linked at Asn-460. The next 2 membrane-spanning stretches (helical) occupy residues 464–484 (NLLF…QISA) and 489–509 (VAMF…LNFF). In terms of domain architecture, ABC transporter spans 552-786 (VEFTHVNFAY…NGMYSQMWAK (235 aa)). 585 to 592 (GESGSGKS) serves as a coordination point for ATP. Residues Asn-639 and Asn-797 are each glycosylated (N-linked (GlcNAc...) asparagine).

It belongs to the ABC transporter superfamily. ABCB family. Heavy Metal importer (TC 3.A.1.210) subfamily.

The protein resides in the membrane. ABC transporter; part of the gene cluster that mediates the biosynthesis of aspirochlorine (or antibiotic A30641), an unusual halogenated spiro compound with distinctive antifungal properties due to selective inhibition of protein biosynthesis, and which is also active against bacteria, viruses, and murine tumor cells. The chain is ABC transporter aclQ from Aspergillus oryzae (strain ATCC 42149 / RIB 40) (Yellow koji mold).